The chain runs to 273 residues: 3-((Z)-2-isocyanoethenyl)-1H-indole synthase (273 aa).

Residues His105, Asp107, and His254 each contribute to the Fe cation site.

The protein belongs to the TfdA dioxygenase family. Fe(2+) is required as a cofactor.

It catalyses the reaction (2S)-3-(1H-indol-3-yl)-2-isocyanopropanoate + 2-oxoglutarate + O2 + H(+) = 3-[(Z)-2-isocyanoethenyl]-1H-indole + succinate + 2 CO2 + H2O. Functionally, involved in the biosynthesis of ambiguines, a family of hapalindole-type alkaloids. Responsible for the synthesis of Z-3-(2-isocyanoethen)-indole, a biosynthetic precursor to all ambiguines. The sequence is that of 3-((Z)-2-isocyanoethenyl)-1H-indole synthase from Fischerella ambigua (strain UTEX 1903).